We begin with the raw amino-acid sequence, 968 residues long: RNA polymerase-associated protein RapA (968 aa).

A Helicase ATP-binding domain is found at 164-334 (DVGRRHAPRV…FARLRLLDPN (171 aa)). Residue 177-184 (DEVGLGKT) participates in ATP binding. Residues 280-283 (DEAH) carry the DEAH box motif. The 173-residue stretch at 490-662 (RVEWLMGYLT…YLASPDQTEG (173 aa)) folds into the Helicase C-terminal domain.

The protein belongs to the SNF2/RAD54 helicase family. RapA subfamily. As to quaternary structure, interacts with the RNAP. Has a higher affinity for the core RNAP than for the holoenzyme. Its ATPase activity is stimulated by binding to RNAP.

Its function is as follows. Transcription regulator that activates transcription by stimulating RNA polymerase (RNAP) recycling in case of stress conditions such as supercoiled DNA or high salt concentrations. Probably acts by releasing the RNAP, when it is trapped or immobilized on tightly supercoiled DNA. Does not activate transcription on linear DNA. Probably not involved in DNA repair. This Escherichia coli (strain 55989 / EAEC) protein is RNA polymerase-associated protein RapA.